A 211-amino-acid chain; its full sequence is MRTLVVDHPLVAHKLTVLRDKNTPSPVFRQLTEELVTLLAYEATREVRTEPVTIQTPVSTTVGTAFTKPTPLVVPILRAGLGMLEGMTKLVPTAEVGFLGMARDEETLDIITYAERLPDDLTGRQVFVLDPMLATGGTLREAIKFLFKRGASDVTCICLLAAPEGLAKLEEELGEANVHIVLASIDEKLNEKSYIVPGLGDAGDRLYGIAG.

5-phospho-alpha-D-ribose 1-diphosphate contacts are provided by residues Arg78, Arg103, and 130–138; that span reads DPMLATGGT. Uracil contacts are provided by residues Ile195 and 200-202; that span reads GDA. Asp201 contributes to the 5-phospho-alpha-D-ribose 1-diphosphate binding site.

This sequence belongs to the UPRTase family. Mg(2+) serves as cofactor.

It catalyses the reaction UMP + diphosphate = 5-phospho-alpha-D-ribose 1-diphosphate + uracil. Its pathway is pyrimidine metabolism; UMP biosynthesis via salvage pathway; UMP from uracil: step 1/1. With respect to regulation, allosterically activated by GTP. Catalyzes the conversion of uracil and 5-phospho-alpha-D-ribose 1-diphosphate (PRPP) to UMP and diphosphate. The chain is Uracil phosphoribosyltransferase from Pseudarthrobacter chlorophenolicus (strain ATCC 700700 / DSM 12829 / CIP 107037 / JCM 12360 / KCTC 9906 / NCIMB 13794 / A6) (Arthrobacter chlorophenolicus).